The primary structure comprises 435 residues: Ras association domain-containing protein 9 (435 aa).

Residues 1–22 are disordered; that stretch reads MAPFGRNLLKTRHKNRSPTKDM. Residues 25–119 form the Ras-associating domain; the sequence is EEKEIVVWVC…MQFVLVKTDA (95 aa). Residues 195–291 adopt a coiled-coil conformation; that stretch reads HTIHQQVQRM…KLSAEIEREV (97 aa). Positions 371–423 are disordered; that stretch reads SKDGCQGKENRGKEAEASSSNGEIPPLTQRVFNTYTNDTDSDTGISSNHSQDS. The span at 375–386 shows a compositional bias: basic and acidic residues; the sequence is CQGKENRGKEAE. Polar residues predominate over residues 400-423; it reads RVFNTYTNDTDSDTGISSNHSQDS.

As to quaternary structure, interacts with PAM. Testis, kidney, skeletal muscle, liver, lung, brain, heart, pituitary gland, adrenal gland and ovary.

It is found in the endosome. Functionally, may play a role in regulating vesicuar trafficking in cells. The polypeptide is Ras association domain-containing protein 9 (Rassf9) (Rattus norvegicus (Rat)).